Reading from the N-terminus, the 180-residue chain is uncharacterized protein (180 aa).

The interval 1-31 is disordered; the sequence is MSTYEEEHGIQQNSRDYQEVGGTSQEEQRRQ. Serine 2 carries the post-translational modification N-acetylserine. The RING-type zinc-finger motif lies at 109-153; that stretch reads CSICYTNYLEDEYPLVVELPHCHHKFDLECLSVWLSRSTTCPLCR.

This is an uncharacterized protein from Saccharomyces cerevisiae (strain ATCC 204508 / S288c) (Baker's yeast).